We begin with the raw amino-acid sequence, 176 residues long: Ribosome rescue factor SmrB (176 aa).

The Smr domain occupies 98–173; it reads LDVHGLNQDQ…RSTAILFLIH (76 aa).

The protein belongs to the SmrB family. As to quaternary structure, associates with collided ribosomes, but not with correctly translating polysomes.

Acts as a ribosome collision sensor. Detects stalled/collided disomes (pairs of ribosomes where the leading ribosome is stalled and a second ribosome has collided with it) and endonucleolytically cleaves mRNA at the 5' boundary of the stalled ribosome. Stalled/collided disomes form a new interface (primarily via the 30S subunits) that binds SmrB. Cleaved mRNA becomes available for tmRNA ligation, leading to ribosomal subunit dissociation and rescue of stalled ribosomes. The chain is Ribosome rescue factor SmrB from Buchnera aphidicola subsp. Baizongia pistaciae (strain Bp).